Reading from the N-terminus, the 212-residue chain is MTDEKVINKKLVGDNKLFRHQAKFVAGAMDIKQLPNFALPQIAFVGKSNVGKSSLINTICNNKKLAKVSNTPGRTRQINFFNLVDKLIIVDLPGYGFAQVPNQVKDQWEILINHYLRKSDNLKLVNLLIDSRRGIKENDKKVAELLLANKRDFQIIFTKSDKVTDRKNLNLEAQNFLATLNYSCNLIYVSSRSKEGARELKTSLAKCIKLEK.

An EngB-type G domain is found at 38-210 (ALPQIAFVGK…KTSLAKCIKL (173 aa)). GTP contacts are provided by residues 46 to 53 (GKSNVGKS), 73 to 77 (GRTRQ), 91 to 94 (DLPG), 158 to 161 (TKSD), and 189 to 191 (VSS). Positions 53 and 75 each coordinate Mg(2+).

It belongs to the TRAFAC class TrmE-Era-EngA-EngB-Septin-like GTPase superfamily. EngB GTPase family. Mg(2+) serves as cofactor.

Its function is as follows. Necessary for normal cell division and for the maintenance of normal septation. The polypeptide is Probable GTP-binding protein EngB (Rickettsia bellii (strain OSU 85-389)).